A 143-amino-acid polypeptide reads, in one-letter code: Transcriptional regulator MraZ (143 aa).

2 SpoVT-AbrB domains span residues 5 to 47 (EYKH…SLKE) and 76 to 119 (ACEC…SEEN).

It belongs to the MraZ family. As to quaternary structure, forms oligomers.

Its subcellular location is the cytoplasm. It localises to the nucleoid. The sequence is that of Transcriptional regulator MraZ from Caldicellulosiruptor saccharolyticus (strain ATCC 43494 / DSM 8903 / Tp8T 6331).